A 553-amino-acid polypeptide reads, in one-letter code: Solute carrier family 45 member 3 (553 aa).

The next 11 membrane-spanning stretches (helical) occupy residues 19 to 39 (LLVNLLTFGLEVCLAAGITYV), 52 to 72 (FMTMVLGIGPVLGLVCVPLLG), 88 to 108 (FIWALSLGILLSLFLIPRAGW), 120 to 140 (LELALLILGVGLLDFCGQVCF), 161 to 181 (YSVYAFMISLGGCLGYLLPAI), 198 to 218 (CLFGLLTLIFLTCVAATLLVA), 275 to 295 (FVAELCSWMALMTFTLFYTDF), 323 to 343 (MGSLGLFLQCAISLVFSLVMD), 353 to 373 (AVYLASVAAFPVAAGATCLSH), 382 to 402 (AALTGFTFSALQILPYTLASL), and 522 to 542 (AYMVSAAGLGLVAIYFATQVV).

This sequence belongs to the glycoside-pentoside-hexuronide (GPH) cation symporter transporter (TC 2.A.2) family. As to expression, prostate specific. Expressed in all prostatic glandular cells. Expressed both in normal and cancerous prostates.

The protein localises to the membrane. The catalysed reaction is sucrose(out) + H(+)(out) = sucrose(in) + H(+)(in). Functionally, proton-associated sucrose transporter. May be able to transport also glucose and fructose. The chain is Solute carrier family 45 member 3 from Homo sapiens (Human).